A 512-amino-acid chain; its full sequence is MKIRSQVGMVLNLDKCIGCHTCSVTCKNVWTSREGVEYAWFNNVETKPGQGFPTDWENQEKYKGGWIRKINGKLQPRMGNRAMLLGKIFANPHLPGIDDYYEPFDFDYQNLHTAPEGSKSQPIARPRSLITGERMAKIEKGPNWEDDLGGEFDKLAKDKNFDNIQKAMYSQFENTFMMYLPRLCEHCLNPACVATCPSGAIYKREEDGIVLIDQDKCRGWRMCITGCPYKKIYFNWKSGKSEKCIFCYPRIEAGQPTVCSETCVGRIRYLGVLLYDADAIERAASTENEKDLYQRQLDVFLDPNDPKVIEQAIKDGIPLSVIEAAQQSPVYKMAMEWKLALPLHPEYRTLPMVWYVPPLSPIQSAADAGELGSNGILPDVESLRIPVQYLANLLTAGDTKPILRALKRMLAMRHYKRAETVDGKVDTRALEEVGLTEAQAQEMYRYLAIANYEDRFVVPSSHRELAREAFPEKNGCGFTFGDGCHGSDTKFNLFNSRRIDAIDVTSKTEPHP.

3 consecutive 4Fe-4S ferredoxin-type domains span residues Val7–Gly35, Thr175–Glu206, and Gly208–Lys237. [4Fe-4S] cluster is bound by residues Cys16, Cys19, Cys22, Cys26, Cys184, Cys187, and Cys192. [3Fe-4S] cluster contacts are provided by Cys196, Cys217, and Cys223. Cys227, Cys244, Cys247, Cys259, and Cys263 together coordinate [4Fe-4S] cluster.

As to quaternary structure, dimer of heterotrimers each composed of an alpha, a beta and a gamma chain. Alpha and beta are catalytic chains; gamma chains are involved in binding the enzyme complex to the cytoplasmic membrane. It depends on [4Fe-4S] cluster as a cofactor. [3Fe-4S] cluster is required as a cofactor.

It is found in the cell membrane. It carries out the reaction nitrate + a quinol = a quinone + nitrite + H2O. In terms of biological role, the nitrate reductase enzyme complex allows S.flexneri to use nitrate as an electron acceptor during anaerobic growth. The beta chain is an electron transfer unit containing four cysteine clusters involved in the formation of iron-sulfur centers. Electrons are transferred from the gamma chain to the molybdenum cofactor of the alpha subunit. This chain is Respiratory nitrate reductase 1 beta chain (narH), found in Shigella flexneri.